We begin with the raw amino-acid sequence, 505 residues long: MSRNYNDELQFLDKINKNCWRIKKGFVPNMQVEGVFYVNDALEKLMFEELRNACRGGGVGGFLPAMKQIGNVAALPGIVHRSIGLPDVHSGYGFAIGNMAAFDMNDPEAVVSPGGVGFDINCGVRLLRTNLDESDVQPVKEQLAQAMFDHIPVGVGSKGVIPMNAKDLEEALEMGVDWSLREGYAWAEDKEHCEEYGRMLQADPNKVSPRAKKRGLPQLGTLGAGNHYAEIQVVDEIFNEYAAKKMGIDHKGQVCVMIHSGSRGLGHQVATDALVAMEKAMKRDKIIVNDRQLACARIASPEGQDYLKGMAAAGNYAWVNRSSMTFLTRQAFAKVFNTTPDDLDLHVIYDVSHNIAKVEQHVVDGKERTLLVHRKGSTRAFPPHHPLIAVDYQLTGQPVLIGGTMGTCSYVLTGTEQGMTETFGTTCHGAGRALSRAKSRRNLDFQDVLDKLADMGIAIRVASPKLVMEEAPESYKNVTDVVNTCHDAGISKKAIKLRPIAVIKG.

Mn(2+) is bound by residues D119, C122, H227, and H259. Residue 226–230 coordinates GMP; sequence NHYAE. S300 carries the post-translational modification Phosphoserine. A Mn(2+)-binding site is contributed by H353. GMP contacts are provided by residues 353–354, 402–405, S409, and 428–431; these read HN, GGTM, and HGAG. H428 functions as the GMP-histidine intermediate in the catalytic mechanism. A Glycyl lysine isopeptide (Lys-Gly) (interchain with G-Cter in SUMO2) cross-link involves residue K496. K504 serves as a coordination point for GMP.

This sequence belongs to the RtcB family. As to quaternary structure, catalytic component of the tRNA-splicing ligase complex. It depends on Mn(2+) as a cofactor.

Its subcellular location is the nucleus. The protein localises to the cytoplasm. The catalysed reaction is a 3'-end 3'-phospho-ribonucleotide-RNA + a 5'-end dephospho-ribonucleoside-RNA + GTP = a ribonucleotidyl-ribonucleotide-RNA + GMP + diphosphate. It carries out the reaction a 3'-end 2',3'-cyclophospho-ribonucleotide-RNA + a 5'-end dephospho-ribonucleoside-RNA + GTP + H2O = a ribonucleotidyl-ribonucleotide-RNA + GMP + diphosphate + H(+). Catalytic subunit of the tRNA-splicing ligase complex that acts by directly joining spliced tRNA halves to mature-sized tRNAs by incorporating the precursor-derived splice junction phosphate into the mature tRNA as a canonical 3',5'-phosphodiester. May act as an RNA ligase with broad substrate specificity, and may function toward other RNAs. The protein is RNA-splicing ligase RtcB homolog of Rattus norvegicus (Rat).